Reading from the N-terminus, the 314-residue chain is Bis(5'-nucleosyl)-tetraphosphatase, symmetrical (314 aa).

The tract at residues 267 to 314 is disordered; the sequence is QVPGNPITHPPKTAQRPRQPRRRQRQRGGDQAQTGPAPTPASTGPAGG. Residues 297-314 show a composition bias toward low complexity; the sequence is QAQTGPAPTPASTGPAGG.

The protein belongs to the Ap4A hydrolase family.

The enzyme catalyses P(1),P(4)-bis(5'-adenosyl) tetraphosphate + H2O = 2 ADP + 2 H(+). Hydrolyzes diadenosine 5',5'''-P1,P4-tetraphosphate to yield ADP. The protein is Bis(5'-nucleosyl)-tetraphosphatase, symmetrical of Xanthomonas axonopodis pv. citri (strain 306).